A 146-amino-acid chain; its full sequence is Large ribosomal subunit protein uL15 (146 aa).

Residues 1–54 are disordered; sequence MKLHELQPAAGSRKAPKRVGRGTGSGLGRNAGKGEKGQNARSGGGVRPGFEGGQ. Gly residues-rich tracts occupy residues 21 to 31 and 42 to 52; these read RGTGSGLGRNA and SGGGVRPGFEG.

This sequence belongs to the universal ribosomal protein uL15 family. As to quaternary structure, part of the 50S ribosomal subunit.

In terms of biological role, binds to the 23S rRNA. The protein is Large ribosomal subunit protein uL15 of Clostridium botulinum (strain Alaska E43 / Type E3).